Reading from the N-terminus, the 660-residue chain is Arginine--tRNA ligase, cytoplasmic (660 aa).

N-acetylmethionine is present on M1. A could be involved in the assembly of the multisynthetase complex region spans residues M1–N72. Residues S200–N202, H211, Y384, D388, and Q412 each bind L-arginine. Positions P201–L212 match the 'HIGH' region motif. Positions N529–S543 are interaction with tRNA.

It belongs to the class-I aminoacyl-tRNA synthetase family. Interacts (via N-terminus) with AIMP1 (via N-terminus); this stimulates its catalytic activity. Interacts (via N-terminus) with LARS2 (via C-terminus). Monomer. Part of a multisubunit complex that groups tRNA ligases for Arg (RARS1), Asp (DARS1), Gln (QARS1), Ile (IARS1), Leu (LARS1), Lys (KARS1), Met (MARS1) the bifunctional ligase for Glu and Pro (EPRS1) and the auxiliary subunits AIMP1/p43, AIMP2/p38 and EEF1E1/p18. Interacts with QARS1. Part of a complex composed of RARS1, QARS1 and AIMP1. Detected in dorsal root ganglion.

It is found in the cytoplasm. It localises to the cytosol. It catalyses the reaction tRNA(Arg) + L-arginine + ATP = L-arginyl-tRNA(Arg) + AMP + diphosphate. Its function is as follows. Forms part of a macromolecular complex that catalyzes the attachment of specific amino acids to cognate tRNAs during protein synthesis. Modulates the secretion of AIMP1 and may be involved in generation of the inflammatory cytokine EMAP2 from AIMP1. The chain is Arginine--tRNA ligase, cytoplasmic (Rars1) from Rattus norvegicus (Rat).